The chain runs to 604 residues: Ribosome-inactivating protein PMRIPm (604 aa).

The signal sequence occupies residues 1–43 (MRVVAAILYINVVVALICGLGIQGGALDLQDYPSVSFQGDAMQ). The active site involves Glu211. 3 cysteine pairs are disulfide-bonded: Cys301–Cys332, Cys348–Cys367, and Cys392–Cys409. Ricin B-type lectin domains follow at residues 335–463 (GEPT…WRVG) and 466–598 (VEPI…WLTV). A 1-alpha repeat occupies 345-387 (AGWCVDVKDGRDNDGNPIQVLSCGDGQERKQQWTFHRDGTIRS). The 1-beta repeat unit spans residues 389–429 (LGKCMTAYGFKHGEYVMIYDCDTAIAGANKWVVSIDGTITN). A 1-gamma repeat occupies 432–465 (SGLVLTAPRGATGTTLLVEKNVHAARQCWRVGDD). The 2-alpha repeat unit spans residues 477–521 (QEKCLEANYLENTNVSRYTKVFLDDCVLDRQQQRWALYSDGTIRA). Residues Cys480 and Cys502 are joined by a disulfide bond. N-linked (GlcNAc...) asparagine glycosylation is present at Asn490. The 2-beta repeat unit spans residues 525 to 563 (RSLRVTADGHRSLDSIIILACKGWGNQRWVFNTDGTILN). The 2-gamma repeat unit spans residues 566 to 599 (AKLVMDVKDSDVSLLQIILHQSTGKPNQKWLTVT).

It belongs to the ribosome-inactivating protein family. Type 2 RIP subfamily. In terms of assembly, disulfide-linked dimer of A and B chains. Post-translationally, the precursor is processed in two chains, A and B, that are linked by a disulfide bond. Glycosylated. In terms of processing, the N-terminus is blocked. As to expression, expressed in rhizome and abundantly in leaves (at protein level).

It catalyses the reaction Endohydrolysis of the N-glycosidic bond at one specific adenosine on the 28S rRNA.. With respect to regulation, strongly inhibited by asialofetuin and asialomucin. Its function is as follows. Gal/GalNAc-specific agglutinin. Behaves as a type-2 ribosome-inactivating protein. Inhibits mammalian ribosomes. The A chain is responsible for inhibiting protein synthesis through the catalytic inactivation of 60S ribosomal subunits by removing adenine from position 4,324 of 28S rRNA. The B chain binds to cell receptors and probably facilitates the entry into the cell of the A chain; B chains are also responsible for cell agglutination (lectin activity). Involved in plant defense against insects. Has very low cytotoxic activity against the human tumor cell line Molt4, but higher against CEM. This Polygonatum multiflorum (Solomon's seal) protein is Ribosome-inactivating protein PMRIPm.